The chain runs to 967 residues: Sarcosine oxidase subunit alpha (967 aa).

A141, D160, E161, R162, S168, V207, A420, and T427 together coordinate NAD(+). T694 and E786 together coordinate (6R)-5,10-methylene-5,6,7,8-tetrahydrofolate.

Belongs to the GcvT family. In terms of assembly, heterotetramer composed of subunits alpha (SoxA), beta (SoxB), gamma (SoxG) and delta (SoxD). NAD(+) serves as cofactor.

It is found in the cytoplasm. The catalysed reaction is sarcosine + (6S)-5,6,7,8-tetrahydrofolate + O2 = (6R)-5,10-methylene-5,6,7,8-tetrahydrofolate + glycine + H2O2. The enzyme catalyses sarcosine + O2 + H2O = formaldehyde + glycine + H2O2. In terms of biological role, in the presence of tetrahydrofolate, catalyzes the oxidative demethylation of sarcosine to yield glycine, 5,10-methylenetetrahydrofolate and hydrogen peroxide. In the absence of tetrahydrofolate, catalyzes the oxidative demethylation of sarcosine to yield glycine, formaldehyde and hydrogen peroxide. This chain is Sarcosine oxidase subunit alpha, found in Corynebacterium sp. (strain P-1).